Here is a 2547-residue protein sequence, read N- to C-terminus: Piezo-type mechanosensitive ion channel component 1 (2547 aa).

The Cytoplasmic portion of the chain corresponds to 1–12 (MEPHVLGAGLYW). The chain crosses the membrane as a helical span at residues 13–25 (LLLPCTLLAASLL). Over 26–28 (RFN) the chain is Extracellular. A helical membrane pass occupies residues 29–44 (ALSLVYLLFLLLLPWL). Over 45–58 (PGPSRHSIPGHTGR) the chain is Cytoplasmic. The helical transmembrane segment at 59–81 (LLRALLCLSLLFLVAHLAFQICL) threads the bilayer. Topologically, residues 82–121 (HTVPHLDQFLGQNGSLWVKVSQHIGVTRLDLKDIFNTTRL) are extracellular. N-linked (GlcNAc...) asparagine glycosylation is present at asparagine 94. A helical transmembrane segment spans residues 122 to 138 (VAPDLGVLLASSLCLGL). The Cytoplasmic portion of the chain corresponds to 139–201 (CGRLTRKAGQ…ASRFRVTAHW (63 aa)). The helical transmembrane segment at 202–221 (LLMTSGRTLVIVLLALAGIA) threads the bilayer. Over 222 to 223 (HP) the chain is Extracellular. A helical membrane pass occupies residues 224 to 243 (SAFSSIYLVVFLAICTWWSC). The Cytoplasmic portion of the chain corresponds to 244–254 (HFPLSPLGFNT). A helical transmembrane segment spans residues 255–275 (LCVMVSCFGAGHLICLYCYQT). Residues 276 to 316 (PFIQDMLPPGNIWARLFGLKNFVDLPNYSSPNALVLNTKHA) are Extracellular-facing. A helical transmembrane segment spans residues 317-337 (WPIYVSPGILLLLYYTATSLL). Over 338–424 (KLHKSCPSEL…EMSPLHGLGH (87 aa)) the chain is Cytoplasmic. Residues 347–387 (LRKETPREDEEHELELDHLEPEPQARDATQGEMPMTTEPDL) form a disordered region. Over residues 361–371 (ELDHLEPEPQA) the composition is skewed to basic and acidic residues. A helical transmembrane segment spans residues 425–445 (LIMDQSYVCALIAMMVWSIMY). Residues 446–447 (HS) are Extracellular-facing. A helical membrane pass occupies residues 448–463 (WLTFVLLLWACLIWTV). The Cytoplasmic segment spans residues 464-468 (RSRHQ). A helical transmembrane segment spans residues 469–491 (LAMLCSPCILLYGLTLCCLRYVW). The Extracellular segment spans residues 492-518 (AMELPELPTTLGPVSLHQLGLEHTRYP). The helical transmembrane segment at 519–536 (CLDLGAMLLYLLTFWLLL) threads the bilayer. Residues 537 to 580 (RQFVKEKLLKKQKVPAALLEVTVADTEPTQTQTLLRSLGELVTG) are Cytoplasmic-facing. A helical transmembrane segment spans residues 581 to 601 (IYVKYWIYVCAGMFIVVSFAG). Position 602 (arginine 602) is a topological domain, extracellular. A helical transmembrane segment spans residues 603-623 (LVVYKIVYMFLFLLCLTLFQV). Over 624–633 (YYTLWRKLLR) the chain is Cytoplasmic. Residues 634 to 655 (VFWWLVVAYTMLVLIAVYTFQF) traverse the membrane as a helical segment. The Extracellular portion of the chain corresponds to 656-685 (QDFPTYWRNLTGFTDEQLGDLGLEQFSVSE). The helical transmembrane segment at 686–702 (LFSSILIPGFFLLACIL) threads the bilayer. At 703–811 (QLHYFHRPFM…RRLLELHVFK (109 aa)) the chain is on the cytoplasmic side. Serine 758 carries the post-translational modification Phosphoserine. Residues 812–823 (LVALYTVWVALK) form a helical membrane-spanning segment. The Extracellular segment spans residues 824–826 (EVS). The helical transmembrane segment at 827–840 (VMNLLLVVLWAFAL) threads the bilayer. Over 841 to 854 (PYPRFRPMASCLST) the chain is Cytoplasmic. A helical membrane pass occupies residues 855–869 (VWTCIIIVCKMLYQL). Topologically, residues 870–921 (KIVNPHEYSSNCTEPFPNNTNLQPLEINQSLLYRGPVDPANWFGVRKGYPNL) are extracellular. Residues 922-949 (GYIQNHLQILLLLVFEAVVYRRQEHYRR) form a helical membrane-spanning segment. The Cytoplasmic portion of the chain corresponds to 950–989 (QHQQAPLPAQAVCADGTRQRLDQDLLSCLKYFINFFFYKF). The chain crosses the membrane as a helical span at residues 990 to 1005 (GLEICFLMAVNVIGQR). The Extracellular portion of the chain corresponds to 1006–1007 (MN). A helical membrane pass occupies residues 1008–1023 (FMVILHGCWLVAILTR). The Cytoplasmic portion of the chain corresponds to 1024–1036 (RRREAIARLWPNY). Residues 1037-1052 (CLFLTLFLLYQYLLCL) traverse the membrane as a helical segment. The Extracellular portion of the chain corresponds to 1053 to 1091 (GMPPALCIDYPWRWSKAIPMNSALIKWLYLPDFFRAPNS). The helical transmembrane segment at 1092–1113 (TNLISDFLLLLCASQQWQVFSA) threads the bilayer. The Cytoplasmic segment spans residues 1114–1148 (ERTEEWQRMAGINTDHLEPLRGEPNPIPNFIHCRS). The helical transmembrane segment at 1149 to 1175 (YLDMLKVAVFRYLFWLVLVVVFVAGAT) threads the bilayer. The Extracellular portion of the chain corresponds to 1176 to 1180 (RISIF). The chain crosses the membrane as a helical span at residues 1181–1199 (GLGYLLACFYLLLFGTTLL). The Cytoplasmic segment spans residues 1200 to 1212 (QKDTRAQLVLWDC). The chain crosses the membrane as a helical span at residues 1213–1231 (LILYNVTVIISKNMLSLLS). The Extracellular segment spans residues 1232–1280 (CVFVEQMQSNFCWVIQLFSLVCTVKGYYDPKEMMTRDRDCLLPVEEAGI). The chain crosses the membrane as a helical span at residues 1281–1297 (IWDSICFFFLLLQRRIF). Residues 1298–1656 (LSHYFLHVSA…ELLLDRRLHI (359 aa)) are Cytoplasmic-facing. Residues 1334–1365 (HRQIEEKSLAQLKRQMKRIRAKQEKYRQSQAS) are a coiled coil. Disordered regions lie at residues 1354–1396 (AKQE…RRQW), 1456–1480 (RRER…DVEP), and 1567–1610 (TLSG…NTRS). Residues 1361 to 1372 (QSQASRGQLQSK) show a composition bias toward polar residues. Residues 1376–1392 (DPSQEPGPDSPGGSSPP) are compositionally biased toward low complexity. 2 positions are modified to phosphoserine: serine 1385 and serine 1390. Polar residues predominate over residues 1592–1610 (SSMTDDTSSPLSTGYNTRS). 3 positions are modified to phosphoserine: serine 1627, serine 1631, and serine 1646. A helical transmembrane segment spans residues 1657-1700 (PELEEAERFEAQQGRTLRLLRAGYQCVAAHSELLCYFIIILNHM). The Extracellular portion of the chain corresponds to 1701–1704 (VTAS). A helical membrane pass occupies residues 1705–1720 (AASLVLPVLVFLWAML). At 1721–1728 (TIPRPSKR) the chain is on the cytoplasmic side. Residues 1729–1747 (FWMTAIVFTEVMVVTKYLF) traverse the membrane as a helical segment. At 1748 to 1779 (QFGFFPWNSYVVLRRYENKPYFPPRILGLEKT) the chain is on the extracellular side. Residues 1780–1801 (DSYIKYDLVQLMALFFHRSQLL) form a helical membrane-spanning segment. Topologically, residues 1802 to 1976 (CYGLWDHEED…HTKYRAATDV (175 aa)) are cytoplasmic. Composition is skewed to basic and acidic residues over residues 1816–1837 (DHCR…KLES) and 1855–1880 (PRDH…DLKP). Residues 1816 to 1931 (DHCRSSVKDR…RPRHTQEKSK (116 aa)) are disordered. Positions 1881 to 1894 (RHTRHISIRFRRRK) are enriched in basic residues. Over residues 1912–1931 (GEGKETTERKRPRHTQEKSK) the composition is skewed to basic and acidic residues. A helical membrane pass occupies residues 1977–1996 (YALMFLADIVDIIIIIFGFW). Residues 1997–2016 (AFGKHSAATDIASSLSDDQV) are Extracellular-facing. A helical membrane pass occupies residues 2017–2033 (PQAFLFMLLVQFGTMVI). The Cytoplasmic portion of the chain corresponds to 2034 to 2047 (DRALYLRKTVLGKL). Residues 2048 to 2068 (AFQVVLVVAIHIWMFFILPAV) form a helical membrane-spanning segment. Residues 2069-2076 (TERMFSQN) lie on the Extracellular side of the membrane. The helical transmembrane segment at 2077 to 2092 (AVAQLWYFVKCIYFAL) threads the bilayer. Over 2093-2192 (SAYQIRCGYP…KKKIVKYGMG (100 aa)) the chain is Cytoplasmic. The chain crosses the membrane as a helical span at residues 2193–2213 (GLIILFLIAIIWFPLLFMSLI). The Extracellular segment spans residues 2214–2457 (RSVVGVVNQP…IFSDKVSPPS (244 aa)). Cysteine 2437 and cysteine 2441 are oxidised to a cystine. Residues 2458–2478 (LGFLAGYGIVGLYVSIVLVVG) traverse the membrane as a helical segment. Residues 2479–2547 (KFVRGFFSEI…TMIKWTRERE (69 aa)) are Cytoplasmic-facing.

It belongs to the PIEZO (TC 1.A.75) family. As to quaternary structure, homotrimer; the homotrimer forms a propeller-shaped Piezo channel with a cation-ion conducting pore. Heterotrimeric interaction may occur between PIEZO1 and PIEZO2. Interacts with PKD2. Interacts with STOMl3. Interacts with TMC1, TMC2, PCDG15 and CIB2; the interaction may be part of the MET complex. Interacts with MDFIC (via C-terminus); the interaction prolongs Piezo channel inactivation. Interacts with MDFI (via C-terminus); the interaction prolongs Piezo channel inactivation. As to expression, expressed in bladder, colon, kidney and skin. Also expressed in bone marrow, liver, lung, spleen and erythrocytes (at protein level). Expressed in myoblasts (at protein level). Expressed in red blood cells. Expressed in cochlear inner and outer hair cells (IHCs and OHCs) and vestibular organ HCs.

It is found in the endoplasmic reticulum membrane. The protein localises to the endoplasmic reticulum-Golgi intermediate compartment membrane. It localises to the cell membrane. Its subcellular location is the cell projection. The protein resides in the lamellipodium membrane. The enzyme catalyses K(+)(in) = K(+)(out). It carries out the reaction Na(+)(in) = Na(+)(out). The catalysed reaction is Ca(2+)(in) = Ca(2+)(out). It catalyses the reaction Mg(2+)(in) = Mg(2+)(out). Its activity is regulated as follows. Regulated by auxillary subunits MDFIC and MDFI. Down-regulated by phosphatidylserines exposed on the cell surface. Divalent ions decrease the single-channel permeability of K(+). Pore-forming subunit of the mechanosensitive non-specific cation Piezo channel required for rapidly adapting mechanically activated (MA) currents and has a key role in sensing touch and tactile pain. Piezo channels are homotrimeric three-blade propeller-shaped structures that utilize a cap-motion and plug-and-latch mechanism to gate their ion-conducting pathways. Generates currents characterized by a linear current-voltage relationship that are sensitive to ruthenium red and gadolinium. Conductance to monovalent alkali ions is highest for K(+), intermediate for Na(+) and lowest for Li(+). Divalent ions except for Mn(2+) permeate the channel but more slowly than the monovalent ions and they also reduce K(+) currents. Plays a key role in epithelial cell adhesion by maintaining integrin activation through R-Ras recruitment to the ER, most probably in its activated state, and subsequent stimulation of calpain signaling. In inner ear hair cells, PIEZO1/2 subunits may constitute part of the mechanotransducer (MET) non-selective cation channel complex where they may act as pore-forming ion-conducting component in the complex. In the kidney, may contribute to the detection of intraluminal pressure changes and to urine flow sensing. Acts as a shear-stress sensor that promotes endothelial cell organization and alignment in the direction of blood flow through calpain activation. Plays a key role in blood vessel formation and vascular structure in both development and adult physiology. Acts as a sensor of phosphatidylserine (PS) flipping at the plasma membrane and governs morphogenesis of muscle cells. In myoblasts, flippase-mediated PS enrichment at the inner leaflet of plasma membrane triggers channel activation and Ca(2+) influx followed by Rho GTPases signal transduction, leading to assembly of cortical actomyosin fibers and myotube formation. The protein is Piezo-type mechanosensitive ion channel component 1 of Mus musculus (Mouse).